A 60-amino-acid chain; its full sequence is U1-theraphotoxin-Agm3a (60 aa).

Positions 1–21 are cleaved as a signal peptide; sequence MKFSVLVFILGLVLLLALSSA. A propeptide spanning residues 22 to 29 is cleaved from the precursor; sequence TEMEENAR. 3 disulfide bridges follow: Cys31–Cys45, Cys38–Cys50, and Cys44–Cys57.

Belongs to the neurotoxin 10 (Hwtx-1) family. 63 (VsTx1) subfamily. As to expression, expressed by the venom gland.

The protein localises to the secreted. Its function is as follows. Inhibits sodium channels Nav1.7/SCN9A and potassium channels Kv11.1/KCNH2. Also binds the voltage-sensor domain of the potassium channel KvAP (from the archaeon Aeropyrum pernix) with very slow apparent binding kinetics and affects channel gating. Reaches its target by dynamically partitioning into anionic or zwitterionic headgroup lipid membranes. May bind to the open state of KvAP. In Acanthoscurria gomesiana (Tarantula spider), this protein is U1-theraphotoxin-Agm3a.